A 65-amino-acid polypeptide reads, in one-letter code: MPKLKTRKAAAKRFRATGTGKIVRRKAGKSHLLEHKSSDKKRSMSKTTLVHERDELNVRLMLPYL.

The segment at 24–48 (RRKAGKSHLLEHKSSDKKRSMSKTT) is disordered. Positions 31–42 (HLLEHKSSDKKR) are enriched in basic and acidic residues.

Belongs to the bacterial ribosomal protein bL35 family.

This chain is Large ribosomal subunit protein bL35, found in Nostoc punctiforme (strain ATCC 29133 / PCC 73102).